We begin with the raw amino-acid sequence, 302 residues long: Spermidine synthase (302 aa).

Residue methionine 1 is modified to N-acetylmethionine. One can recognise a PABS domain in the interval 18 to 253 (EGWFRETCSL…GQIGFMLCSK (236 aa)). Residue glutamine 49 coordinates S-adenosyl 3-(methylsulfanyl)propylamine. Tyrosine 79 is a binding site for putrescine. Residues glutamine 80, aspartate 104, glutamate 124, 155–156 (DG), and aspartate 173 each bind S-adenosyl 3-(methylsulfanyl)propylamine. Aspartate 173 functions as the Proton acceptor in the catalytic mechanism. Residues 173–176 (DSSD) and tyrosine 241 each bind putrescine.

The protein belongs to the spermidine/spermine synthase family. In terms of assembly, homodimer or homotetramer.

It carries out the reaction S-adenosyl 3-(methylsulfanyl)propylamine + putrescine = S-methyl-5'-thioadenosine + spermidine + H(+). It functions in the pathway amine and polyamine biosynthesis; spermidine biosynthesis; spermidine from putrescine: step 1/1. Its activity is regulated as follows. The activity is thought to be regulated mainly by the availability of decarboxylated S-adenosylmethionine. In terms of biological role, catalyzes the production of spermidine from putrescine and decarboxylated S-adenosylmethionine (dcSAM). Has a strong preference for putrescine as substrate, and has very low activity towards 1,3-diaminopropane. Has extremely low activity towards spermidine. This chain is Spermidine synthase (Srm), found in Mus musculus (Mouse).